The following is a 59-amino-acid chain: Large ribosomal subunit protein uL30 (59 aa).

It belongs to the universal ribosomal protein uL30 family. Part of the 50S ribosomal subunit.

In Psychrobacter cryohalolentis (strain ATCC BAA-1226 / DSM 17306 / VKM B-2378 / K5), this protein is Large ribosomal subunit protein uL30.